The primary structure comprises 357 residues: Peptide chain release factor 1 (357 aa).

The residue at position 234 (Gln-234) is an N5-methylglutamine.

It belongs to the prokaryotic/mitochondrial release factor family. Methylated by PrmC. Methylation increases the termination efficiency of RF1.

It localises to the cytoplasm. Its function is as follows. Peptide chain release factor 1 directs the termination of translation in response to the peptide chain termination codons UAG and UAA. This is Peptide chain release factor 1 from Nocardioides sp. (strain ATCC BAA-499 / JS614).